The following is a 264-amino-acid chain: Teichoic acids export ATP-binding protein TagH (264 aa).

Residues Val-5–Lys-243 enclose the ABC transporter domain. Residue Gly-57–Ser-64 coordinates ATP.

The protein belongs to the ABC transporter superfamily. Teichoic acids exporter (TC 3.A.1.104.1) family. The complex is composed of two ATP-binding proteins (TagH) and two transmembrane proteins (TagG).

Its subcellular location is the cell membrane. The catalysed reaction is ATP + H2O + teichoic acidSide 1 = ADP + phosphate + teichoic acidSide 2.. In terms of biological role, part of the ABC transporter complex TagGH involved in teichoic acids export. Responsible for energy coupling to the transport system. In Staphylococcus aureus (strain Mu50 / ATCC 700699), this protein is Teichoic acids export ATP-binding protein TagH.